Consider the following 94-residue polypeptide: Co-chaperonin GroES (94 aa).

The protein belongs to the GroES chaperonin family. In terms of assembly, heptamer of 7 subunits arranged in a ring. Interacts with the chaperonin GroEL.

It is found in the cytoplasm. In terms of biological role, together with the chaperonin GroEL, plays an essential role in assisting protein folding. The GroEL-GroES system forms a nano-cage that allows encapsulation of the non-native substrate proteins and provides a physical environment optimized to promote and accelerate protein folding. GroES binds to the apical surface of the GroEL ring, thereby capping the opening of the GroEL channel. The chain is Co-chaperonin GroES from Alkaliphilus metalliredigens (strain QYMF).